A 97-amino-acid chain; its full sequence is Histone H1.C2 (97 aa).

Residues 24-97 are disordered; that stretch reads AAVPPKKAAP…KKAVKKAPKK (74 aa). Residues 31–97 show a composition bias toward basic residues; it reads AAPKKAVAKK…KKAVKKAPKK (67 aa).

It localises to the nucleus. It is found in the chromosome. This Trypanosoma cruzi protein is Histone H1.C2.